Consider the following 243-residue polypeptide: NH(3)-dependent NAD(+) synthetase (243 aa).

31–38 provides a ligand contact to ATP; sequence GVSGGIDS. Residue aspartate 37 coordinates Mg(2+). Arginine 110 serves as a coordination point for deamido-NAD(+). ATP is bound at residue threonine 130. Glutamate 135 lines the Mg(2+) pocket. Positions 143 and 150 each coordinate deamido-NAD(+). 2 residues coordinate ATP: lysine 159 and serine 181. 227-228 is a binding site for deamido-NAD(+); it reads HK.

This sequence belongs to the NAD synthetase family. In terms of assembly, homodimer.

It carries out the reaction deamido-NAD(+) + NH4(+) + ATP = AMP + diphosphate + NAD(+) + H(+). The protein operates within cofactor biosynthesis; NAD(+) biosynthesis; NAD(+) from deamido-NAD(+) (ammonia route): step 1/1. Its function is as follows. Catalyzes the ATP-dependent amidation of deamido-NAD to form NAD. Uses ammonia as a nitrogen source. The sequence is that of NH(3)-dependent NAD(+) synthetase from Malacoplasma penetrans (strain HF-2) (Mycoplasma penetrans).